The chain runs to 162 residues: Putative auxin-responsive protein IAA28 (162 aa).

Residues 23–118 enclose the PB1 domain; it reads SRFVKVFMHG…TVKRIYIVPA (96 aa). Residues 122-141 are disordered; that stretch reads NESEYQEEEEDNAAAAATAD.

Belongs to the Aux/IAA family. Homodimers and heterodimers.

Its subcellular location is the nucleus. Its function is as follows. Aux/IAA proteins are short-lived transcriptional factors that function as repressors of early auxin response genes at low auxin concentrations. The protein is Putative auxin-responsive protein IAA28 (IAA28) of Oryza sativa subsp. japonica (Rice).